The following is a 101-amino-acid chain: DNA-binding protein Fis (101 aa).

The H-T-H motif DNA-binding region spans 77-96 (QTRAANMLGINRGTLRKKLK).

Belongs to the transcriptional regulatory Fis family. As to quaternary structure, homodimer.

Functionally, activates ribosomal RNA transcription. Plays a direct role in upstream activation of rRNA promoters. The polypeptide is DNA-binding protein Fis (Shewanella loihica (strain ATCC BAA-1088 / PV-4)).